Consider the following 672-residue polypeptide: Serine/threonine-protein kinase ppk16 (672 aa).

Residues 31-279 (YRIESVVGEG…IDQIISHPYF (249 aa)) enclose the Protein kinase domain. ATP contacts are provided by residues 37 to 45 (VGEGSFGKV) and Lys-60. The active-site Proton acceptor is Asp-148. Phosphoserine is present on Ser-231. Positions 375–384 (VSVMSNNQDS) are enriched in polar residues. 4 disordered regions span residues 375–396 (VSVM…DSSN), 416–436 (DTLS…ENYL), 464–572 (NSFG…YSNV), and 632–672 (SGRK…TDLL). Polar residues predominate over residues 472–487 (NLPQTTHVDTGEQNTP). A compositionally biased stretch (low complexity) spans 508–523 (SNSQNSPSKSSNLSIN). Over residues 531–541 (LQNTVISPQPT) the composition is skewed to polar residues. 2 stretches are compositionally biased toward low complexity: residues 549 to 572 (RSLS…YSNV) and 639 to 649 (SSSSLMFNQSS).

It belongs to the protein kinase superfamily. Ser/Thr protein kinase family.

It is found in the cytoplasm. It catalyses the reaction L-seryl-[protein] + ATP = O-phospho-L-seryl-[protein] + ADP + H(+). The catalysed reaction is L-threonyl-[protein] + ATP = O-phospho-L-threonyl-[protein] + ADP + H(+). Its function is as follows. Has a role in meiosis. The polypeptide is Serine/threonine-protein kinase ppk16 (ppk16) (Schizosaccharomyces pombe (strain 972 / ATCC 24843) (Fission yeast)).